The following is a 449-amino-acid chain: UDP-N-acetylmuramoyl-tripeptide--D-alanyl-D-alanine ligase (449 aa).

Residue 106–112 participates in ATP binding; the sequence is GSVGKTS.

The protein belongs to the MurCDEF family. MurF subfamily.

It localises to the cytoplasm. The catalysed reaction is D-alanyl-D-alanine + UDP-N-acetyl-alpha-D-muramoyl-L-alanyl-gamma-D-glutamyl-meso-2,6-diaminopimelate + ATP = UDP-N-acetyl-alpha-D-muramoyl-L-alanyl-gamma-D-glutamyl-meso-2,6-diaminopimeloyl-D-alanyl-D-alanine + ADP + phosphate + H(+). The protein operates within cell wall biogenesis; peptidoglycan biosynthesis. Its function is as follows. Involved in cell wall formation. Catalyzes the final step in the synthesis of UDP-N-acetylmuramoyl-pentapeptide, the precursor of murein. The chain is UDP-N-acetylmuramoyl-tripeptide--D-alanyl-D-alanine ligase from Rickettsia prowazekii (strain Madrid E).